A 444-amino-acid chain; its full sequence is Phosphatidate cytidylyltransferase 2 (444 aa).

Positions 1 to 38 are enriched in basic and acidic residues; that stretch reads MTELRQRVVREDAPPEDKESESEAKLDGETASDSESRA. Residues 1–48 are disordered; it reads MTELRQRVVREDAPPEDKESESEAKLDGETASDSESRAETAPLPTSVD. A Phosphoserine modification is found at Ser-20. A Phosphothreonine modification is found at Thr-30. Ser-32, Ser-34, and Ser-36 each carry phosphoserine. Thr-50 is modified (phosphothreonine). 6 helical membrane-spanning segments follow: residues 78–98, 129–149, 165–185, 212–232, 261–281, and 339–359; these read MIAFFFIIIYLGPMVLMMIVM, WYFLLCVNYFFYGETVTDYFF, HRFISFALYLTGFCMFVLSLV, LVIHNLFEGMIWFIVPISCVI, GFIGGFFATVVFGLLLSYVMS, and IALSTFASLIGPFGGFFASGF.

Belongs to the CDS family. In terms of assembly, homodimer. As to expression, ubiquitous. Expressed in the ganglion cell layer and inner nuclear layer of the retina.

Its subcellular location is the endoplasmic reticulum membrane. The catalysed reaction is a 1,2-diacyl-sn-glycero-3-phosphate + CTP + H(+) = a CDP-1,2-diacyl-sn-glycerol + diphosphate. It catalyses the reaction 1-octadecanoyl-2-(5Z,8Z,11Z,14Z-eicosatetraenoyl)-sn-glycero-3-phosphate + CTP + H(+) = 1-octadecanoyl-2-(5Z,8Z,11Z,14Z-eicosatetraenoyl)-sn-glycero-3-cytidine-5'-diphosphate + diphosphate. It carries out the reaction 1-octadecanoyl-2-(9Z,12Z-octadecadienoyl)-sn-glycero-3-phosphate + CTP + H(+) = 1-octadecanoyl-2-(9Z,12Z-octadecadienoyl)-sn-glycero-3-cytidine-5'-diphosphate + diphosphate. The enzyme catalyses 1-hexadecanoyl-2-(5Z,8Z,11Z,14Z-eicosatetraenoyl)-sn-glycero-3-phosphate + CTP + H(+) = 1-hexadecanoyl-2-(5Z,8Z,11Z,14Z-eicosatetraenoyl)-sn-glycero-3-cytidine-5'-diphosphate + diphosphate. The catalysed reaction is 1,2-di-(5Z,8Z,11Z,14Z)-eicosatetraenoyl-sn-glycero-3-phosphate + CTP + H(+) = 1,2-di-(5Z,8Z,11Z,14Z-eicosatetraenoyl)-sn-glycero-3-cytidine-5'-diphosphate + diphosphate. It catalyses the reaction 1-octadecanoyl-2-(9Z-octadecenoyl)-sn-glycero-3-phosphate + CTP + H(+) = 1-octadecanoyl-2-(9Z-octadecenoyl)-sn-glycero-3-cytidine-5'-diphosphate + diphosphate. It carries out the reaction 1-octadecanoyl-2-(4Z,7Z,10Z,13Z,16Z,19Z-docosahexaenoyl)-sn-glycero-3-phosphate + CTP + H(+) = 1-octadecanoyl-2-(4Z,7Z,10Z,13Z,16Z,19Z-docosahexaenoyl)-sn-glycero-3-cytidine-5'-diphosphate + diphosphate. The enzyme catalyses 1,2-di-(9Z,12Z-octadecadienoyl)-sn-glycero-3-phosphate + CTP + H(+) = 1,2-di-(9Z,12Z-octadecadienoyl)-sn-glycero-3-cytidine-5'-diphosphate + diphosphate. The catalysed reaction is 1,2-di-(9Z-octadecenoyl)-sn-glycero-3-phosphate + CTP + H(+) = 1,2-di-(9Z-octadecenoyl)-sn-glycero-3-cytidine-5'-diphosphate + diphosphate. Its pathway is phospholipid metabolism; CDP-diacylglycerol biosynthesis; CDP-diacylglycerol from sn-glycerol 3-phosphate: step 3/3. Functionally, catalyzes the conversion of phosphatidic acid (PA) to CDP-diacylglycerol (CDP-DAG), an essential intermediate in the synthesis of phosphatidylglycerol, cardiolipin and phosphatidylinositol. Exhibits specificity for the nature of the acyl chains at the sn-1 and sn-2 positions in the substrate, PA and the preferred acyl chain composition is 1-stearoyl-2-arachidonoyl-sn-phosphatidic acid. Plays an important role in regulating the growth and maturation of lipid droplets which are storage organelles at the center of lipid and energy homeostasis. The chain is Phosphatidate cytidylyltransferase 2 from Mus musculus (Mouse).